We begin with the raw amino-acid sequence, 559 residues long: 2-isopropylmalate synthase (559 aa).

Residues 33–307 (PIWCSSDLRD…NPDLDFSDID (275 aa)) form the Pyruvate carboxyltransferase domain. 4 residues coordinate Mg(2+): D42, H246, H248, and N282. Residues 439-559 (ANTPYALVSH…SLSQPEAKAA (121 aa)) are regulatory domain.

Belongs to the alpha-IPM synthase/homocitrate synthase family. LeuA type 2 subfamily. As to quaternary structure, homodimer. Mg(2+) serves as cofactor.

It is found in the cytoplasm. It catalyses the reaction 3-methyl-2-oxobutanoate + acetyl-CoA + H2O = (2S)-2-isopropylmalate + CoA + H(+). The protein operates within amino-acid biosynthesis; L-leucine biosynthesis; L-leucine from 3-methyl-2-oxobutanoate: step 1/4. In terms of biological role, catalyzes the condensation of the acetyl group of acetyl-CoA with 3-methyl-2-oxobutanoate (2-ketoisovalerate) to form 3-carboxy-3-hydroxy-4-methylpentanoate (2-isopropylmalate). The protein is 2-isopropylmalate synthase of Pseudomonas fluorescens (strain Pf0-1).